The sequence spans 467 residues: Argininosuccinate lyase 1 (467 aa).

The protein belongs to the lyase 1 family. Argininosuccinate lyase subfamily.

The protein localises to the cytoplasm. The catalysed reaction is 2-(N(omega)-L-arginino)succinate = fumarate + L-arginine. Its pathway is amino-acid biosynthesis; L-arginine biosynthesis; L-arginine from L-ornithine and carbamoyl phosphate: step 3/3. In Rhizobium meliloti (strain 1021) (Ensifer meliloti), this protein is Argininosuccinate lyase 1.